The sequence spans 205 residues: Holliday junction branch migration complex subunit RuvA (205 aa).

Residues 1 to 64 (MIGRLRGIIL…EDAQLLYGFN (64 aa)) are domain I. The segment at 65 to 143 (DKQERALFRE…GLNGDLFNNT (79 aa)) is domain II. Residues 144-156 (GDIQLPASNSSQI) are flexible linker. The tract at residues 157 to 205 (SDADIEAEAASALVALGYKPQEASRLVSKIAKPGADCETLIRDALRAAL) is domain III.

Belongs to the RuvA family. In terms of assembly, homotetramer. Forms an RuvA(8)-RuvB(12)-Holliday junction (HJ) complex. HJ DNA is sandwiched between 2 RuvA tetramers; dsDNA enters through RuvA and exits via RuvB. An RuvB hexamer assembles on each DNA strand where it exits the tetramer. Each RuvB hexamer is contacted by two RuvA subunits (via domain III) on 2 adjacent RuvB subunits; this complex drives branch migration. In the full resolvosome a probable DNA-RuvA(4)-RuvB(12)-RuvC(2) complex forms which resolves the HJ.

The protein resides in the cytoplasm. Its function is as follows. The RuvA-RuvB-RuvC complex processes Holliday junction (HJ) DNA during genetic recombination and DNA repair, while the RuvA-RuvB complex plays an important role in the rescue of blocked DNA replication forks via replication fork reversal (RFR). RuvA specifically binds to HJ cruciform DNA, conferring on it an open structure. The RuvB hexamer acts as an ATP-dependent pump, pulling dsDNA into and through the RuvAB complex. HJ branch migration allows RuvC to scan DNA until it finds its consensus sequence, where it cleaves and resolves the cruciform DNA. This is Holliday junction branch migration complex subunit RuvA from Yersinia enterocolitica serotype O:8 / biotype 1B (strain NCTC 13174 / 8081).